Here is a 269-residue protein sequence, read N- to C-terminus: 4-hydroxy-tetrahydrodipicolinate reductase (269 aa).

Residues 9-14 (GAGGRM) and Glu35 each bind NAD(+). Arg36 contacts NADP(+). NAD(+) is bound by residues 98-100 (GTT) and 122-125 (ASNY). His155 (proton donor/acceptor) is an active-site residue. His156 is a binding site for (S)-2,3,4,5-tetrahydrodipicolinate. The Proton donor role is filled by Lys159. 165–166 (GT) lines the (S)-2,3,4,5-tetrahydrodipicolinate pocket.

It belongs to the DapB family.

It localises to the cytoplasm. It catalyses the reaction (S)-2,3,4,5-tetrahydrodipicolinate + NAD(+) + H2O = (2S,4S)-4-hydroxy-2,3,4,5-tetrahydrodipicolinate + NADH + H(+). The catalysed reaction is (S)-2,3,4,5-tetrahydrodipicolinate + NADP(+) + H2O = (2S,4S)-4-hydroxy-2,3,4,5-tetrahydrodipicolinate + NADPH + H(+). It functions in the pathway amino-acid biosynthesis; L-lysine biosynthesis via DAP pathway; (S)-tetrahydrodipicolinate from L-aspartate: step 4/4. Its function is as follows. Catalyzes the conversion of 4-hydroxy-tetrahydrodipicolinate (HTPA) to tetrahydrodipicolinate. This is 4-hydroxy-tetrahydrodipicolinate reductase from Actinobacillus pleuropneumoniae serotype 3 (strain JL03).